Consider the following 114-residue polypeptide: Cytochrome c oxidase subunit 4B (114 aa).

Transmembrane regions (helical) follow at residues 29 to 49 (QIVVFALMIFLTLMSFMAVAT), 56 to 76 (FAIPFIFILAVIQFALQLFFF), and 89 to 109 (AFMISGIFITVPTIAALMLLL).

Belongs to the cytochrome c oxidase bacterial subunit 4 family.

It is found in the cell membrane. The enzyme catalyses 4 Fe(II)-[cytochrome c] + O2 + 8 H(+)(in) = 4 Fe(III)-[cytochrome c] + 2 H2O + 4 H(+)(out). In Alkalihalophilus pseudofirmus (strain ATCC BAA-2126 / JCM 17055 / OF4) (Bacillus pseudofirmus), this protein is Cytochrome c oxidase subunit 4B (ctaF).